Reading from the N-terminus, the 318-residue chain is MRAFVLFAVVAMAATMAVAEQCGSQAGGATCPNCLCCSRFGWCGSTPYCGDGCQSQCSGCGGGSTPVTPTPSGGGGVSSIVSRALFDRMLLHRNDGACQAKGFYTYDAFVAAASAFRGFGTTGGTDTRKREVAAFLAQTSHETTGGWATAPDGAFAWGYCFKQERGATSNYCTPSAQWPCAPGKSYYGRGPIQLSHNYNYGPAGRAIGVDLLRNPDLVATDPTVSFKTAMWFWMTAQAPKPSSHAVITGQWSPSGTDRAAGRVPGFGVITNIVNGGIECGHGQDSRVADRIGFYKRYCDILGVGYGNNLDCYSQRPFA.

The N-terminal stretch at 1–19 is a signal peptide; that stretch reads MRAFVLFAVVAMAATMAVA. The 40-residue stretch at 20–59 folds into the Chitin-binding type-1 domain; it reads EQCGSQAGGATCPNCLCCSRFGWCGSTPYCGDGCQSQCSG. Intrachain disulfides connect Cys22-Cys37, Cys31-Cys43, Cys36-Cys49, Cys53-Cys57, Cys98-Cys160, Cys172-Cys180, and Cys279-Cys311. The active-site Proton donor is Glu142.

The protein belongs to the glycosyl hydrolase 19 family. Chitinase class I subfamily.

It catalyses the reaction Random endo-hydrolysis of N-acetyl-beta-D-glucosaminide (1-&gt;4)-beta-linkages in chitin and chitodextrins.. Defense against chitin-containing fungal pathogens. This is 26 kDa endochitinase 1 from Hordeum vulgare (Barley).